A 155-amino-acid chain; its full sequence is Small ribosomal subunit protein uS7 (155 aa).

The protein belongs to the universal ribosomal protein uS7 family. As to quaternary structure, part of the 30S ribosomal subunit. Contacts proteins S9 and S11.

Functionally, one of the primary rRNA binding proteins, it binds directly to 16S rRNA where it nucleates assembly of the head domain of the 30S subunit. Is located at the subunit interface close to the decoding center, probably blocks exit of the E-site tRNA. The polypeptide is Small ribosomal subunit protein uS7 (Corynebacterium efficiens (strain DSM 44549 / YS-314 / AJ 12310 / JCM 11189 / NBRC 100395)).